An 88-amino-acid chain; its full sequence is Translation initiation factor IF-1 2 (88 aa).

Residues 1–72 (MAKEELIELQ…TKGRINFRHK (72 aa)) form the S1-like domain.

The protein belongs to the IF-1 family. Component of the 30S ribosomal translation pre-initiation complex which assembles on the 30S ribosome in the order IF-2 and IF-3, IF-1 and N-formylmethionyl-tRNA(fMet); mRNA recruitment can occur at any time during PIC assembly.

It localises to the cytoplasm. One of the essential components for the initiation of protein synthesis. Stabilizes the binding of IF-2 and IF-3 on the 30S subunit to which N-formylmethionyl-tRNA(fMet) subsequently binds. Helps modulate mRNA selection, yielding the 30S pre-initiation complex (PIC). Upon addition of the 50S ribosomal subunit IF-1, IF-2 and IF-3 are released leaving the mature 70S translation initiation complex. This chain is Translation initiation factor IF-1 2, found in Bordetella avium (strain 197N).